The chain runs to 310 residues: Homocysteine S-methyltransferase (310 aa).

The region spanning 1–310 (MSQNNPLRAL…ADIAALKARS (310 aa)) is the Hcy-binding domain. The Zn(2+) site is built by Cys-229, Cys-295, and Cys-296.

As to quaternary structure, monomer. Zn(2+) serves as cofactor.

It catalyses the reaction S-methyl-L-methionine + L-homocysteine = 2 L-methionine + H(+). Functionally, catalyzes methyl transfer from S-methylmethionine or S-adenosylmethionine (less efficient) to homocysteine, selenohomocysteine and less efficiently selenocysteine. In Escherichia coli (strain K12), this protein is Homocysteine S-methyltransferase (mmuM).